The chain runs to 352 residues: fMet-Leu-Phe receptor (352 aa).

At 1–27 the chain is on the extracellular side; it reads MDSNASLPLNVSGGTQATPAGLVVLDV. N-linked (GlcNAc...) asparagine glycosylation is found at Asn-4 and Asn-10. A helical membrane pass occupies residues 28-50; that stretch reads FSYLILVVTFVLGVLGNGLVIWV. Over 51–61 the chain is Cytoplasmic; the sequence is TGFRMTHTVTT. Residues 62–83 traverse the membrane as a helical segment; the sequence is ISYLNLALADFSFTSTLPFFIV. Over 84–100 the chain is Extracellular; that stretch reads TKALGGHWPFGWFLCKF. An intrachain disulfide couples Cys-98 to Cys-178. The chain crosses the membrane as a helical span at residues 101 to 121; it reads VFTIVDINLFGSVFLIALIAL. Over 122–140 the chain is Cytoplasmic; that stretch reads DRCICVLHPVWAQNHRNVS. The helical transmembrane segment at 141-162 threads the bilayer; it reads LAKKVIVGPWICALLLTLPVII. Residues 163–207 lie on the Extracellular side of the membrane; sequence RVTTLSHPRAPGKMACTFDWSPWTEDPAEKLKVAISMFMVRGIIR. The chain crosses the membrane as a helical span at residues 208–228; the sequence is FIIGFSTPMSIVAVCYGLIAT. The Cytoplasmic portion of the chain corresponds to 229–244; sequence KIHRQGLIKSSRPLRV. A helical transmembrane segment spans residues 245 to 268; it reads LSFVVASFLLCWSPYQIAALIATV. Over 269–287 the chain is Extracellular; that stretch reads RIRELLLGMGKDLRIVLDV. Residues 288 to 307 traverse the membrane as a helical segment; the sequence is TSFVAFFNSCLNPMLYVFMG. The Cytoplasmic segment spans residues 308–352; that stretch reads QDFRERLIHSLPASLERALSEDSAQTSDTGTNSTSAPAEAELQAI.

This sequence belongs to the G-protein coupled receptor 1 family. Post-translationally, phosphorylated; which is necessary for desensitization. As to expression, neutrophils.

The protein resides in the cell membrane. Functionally, high affinity receptor for N-formyl-methionyl peptides (fMLP), which are powerful neutrophil chemotactic factors. Binding of fMLP to the receptor stimulates intracellular calcium mobilization and superoxide anion release. This response is mediated via a G-protein that activates a phosphatidylinositol-calcium second messenger system. Receptor for TAFA4, mediates its effects on chemoattracting macrophages, promoting phagocytosis and increasing ROS release. Receptor for cathepsin CTSG, leading to increased phagocyte chemotaxis. This is fMet-Leu-Phe receptor (FPR1) from Oryctolagus cuniculus (Rabbit).